The chain runs to 589 residues: Proline--tRNA ligase (589 aa).

Belongs to the class-II aminoacyl-tRNA synthetase family. ProS type 1 subfamily. As to quaternary structure, homodimer.

It localises to the cytoplasm. The catalysed reaction is tRNA(Pro) + L-proline + ATP = L-prolyl-tRNA(Pro) + AMP + diphosphate. Its function is as follows. Catalyzes the attachment of proline to tRNA(Pro) in a two-step reaction: proline is first activated by ATP to form Pro-AMP and then transferred to the acceptor end of tRNA(Pro). As ProRS can inadvertently accommodate and process non-cognate amino acids such as alanine and cysteine, to avoid such errors it has two additional distinct editing activities against alanine. One activity is designated as 'pretransfer' editing and involves the tRNA(Pro)-independent hydrolysis of activated Ala-AMP. The other activity is designated 'posttransfer' editing and involves deacylation of mischarged Ala-tRNA(Pro). The misacylated Cys-tRNA(Pro) is not edited by ProRS. The sequence is that of Proline--tRNA ligase from Gloeobacter violaceus (strain ATCC 29082 / PCC 7421).